The following is a 145-amino-acid chain: MQLYLVLLLISYLLTPIGASILGRCVVAKKLYDGGLNYFEGYSLENWVCLAYFESKFNPSAVYENSRDGSTGFGLFQIRDNEWCDHGKNLCSVSCTALLNPNLKDTIECAKKIVKGKQGMGAWPVWSRNCQLSDILDRWLDGCEL.

An N-terminal signal peptide occupies residues methionine 1 to alanine 19. The region spanning serine 20–leucine 145 is the C-type lysozyme domain. Cystine bridges form between cysteine 25–cysteine 143, cysteine 49–cysteine 130, cysteine 84–cysteine 95, and cysteine 91–cysteine 109. Glutamate 54 is a catalytic residue.

Belongs to the glycosyl hydrolase 22 family. Monomer. As to expression, expressed in the brain, lung, ovary, uterus and testis. In testis expressed in the germinal epithelium and on the maturing spermatozoa (at protein level).

The protein resides in the secreted. It is found in the cytoplasmic vesicle. The protein localises to the secretory vesicle. Its subcellular location is the acrosome. It localises to the cell projection. The protein resides in the cilium. It is found in the flagellum. Its function is as follows. May be involved in fertilization. Has no detectable bacteriolytic and lysozyme activities in vitro. This Rattus norvegicus (Rat) protein is Lysozyme-like protein 4 (Lyzl4).